The chain runs to 496 residues: Probable glycine betaine transporter (496 aa).

12 consecutive transmembrane segments (helical) span residues T11–P31, F49–I69, F89–V109, V136–L156, A188–G208, I219–I239, V260–L280, W306–G326, F341–G361, L396–A416, F441–A461, and A468–L488.

The protein belongs to the BCCT transporter (TC 2.A.15) family.

The protein resides in the cell membrane. In terms of biological role, probably acts in the uptake of glycine betaine. May function in the pathway that allows anaerobic methylotrophic growth of D.hafniense using glycine betaine. The polypeptide is Probable glycine betaine transporter (Desulfitobacterium hafniense (strain Y51)).